We begin with the raw amino-acid sequence, 1037 residues long: Nucleoporin NUP120 (1037 aa).

Leucine-zipper stretches follow at residues 131-152 (LQLPLSFLFSSANTLNGEWFHL) and 290-311 (LLPLENGLFQMGTLLVDSSGIL). A Phosphothreonine modification is found at T417.

As to quaternary structure, component of the nuclear pore complex (NPC). NPC constitutes the exclusive means of nucleocytoplasmic transport. NPCs allow the passive diffusion of ions and small molecules and the active, nuclear transport receptor-mediated bidirectional transport of macromolecules such as proteins, RNAs, ribonucleoparticles (RNPs), and ribosomal subunits across the nuclear envelope. Due to its 8-fold rotational symmetry, all subunits are present with 8 copies or multiples thereof. NUP120 is part of the heptameric 0.5 MDa autoassembling NUP84 NPC subcomplex (NUP84, NUP85, NUP120, NUP133, NUP145C, SEC13 and SEH1).

Its subcellular location is the nucleus. The protein localises to the nuclear pore complex. It is found in the nucleus membrane. In terms of biological role, functions as a component of the nuclear pore complex (NPC). NPC components, collectively referred to as nucleoporins (NUPs), can play the role of both NPC structural components and of docking or interaction partners for transiently associated nuclear transport factors. NUP120 is involved in nuclear poly(A)+ RNA and pre-ribosome export, in GSP1 nuclear import, in NPC assembly and distribution, as well as in nuclear envelope organization. The protein is Nucleoporin NUP120 (NUP120) of Saccharomyces cerevisiae (strain ATCC 204508 / S288c) (Baker's yeast).